A 430-amino-acid polypeptide reads, in one-letter code: Tektin-2 (430 aa).

Coiled-coil stretches lie at residues 75–162 and 226–380; these read KETL…FQHL and KNRA…IACK.

This sequence belongs to the tektin family. In terms of assembly, microtubule inner protein component of sperm flagellar doublet microtubules. May interact with CCDC172. Ubiquitinated, leading to its degradation. Deubiquitinated by USP16, promoting its stability. In terms of processing, tyrosine phosphorylated. In terms of tissue distribution, expressed in the testes (at protein level).

It is found in the cytoplasm. The protein localises to the cytoskeleton. It localises to the cilium axoneme. The protein resides in the flagellum axoneme. Its subcellular location is the microtubule organizing center. Microtubule inner protein (MIP) part of the dynein-decorated doublet microtubules (DMTs) in cilia and flagellar axoneme. Plays a key role in the assembly or attachment of the inner dynein arm to microtubules in sperm flagella and tracheal cilia. Forms filamentous polymers in the walls of ciliary and flagellar microtubules. The chain is Tektin-2 (Tekt2) from Mus musculus (Mouse).